Reading from the N-terminus, the 98-residue chain is Aspartyl/glutamyl-tRNA(Asn/Gln) amidotransferase subunit C (98 aa).

A disordered region spans residues 77 to 98; sequence NEAPNPEGDFFRVPQILNTDEE.

The protein belongs to the GatC family. As to quaternary structure, heterotrimer of A, B and C subunits.

It catalyses the reaction L-glutamyl-tRNA(Gln) + L-glutamine + ATP + H2O = L-glutaminyl-tRNA(Gln) + L-glutamate + ADP + phosphate + H(+). The catalysed reaction is L-aspartyl-tRNA(Asn) + L-glutamine + ATP + H2O = L-asparaginyl-tRNA(Asn) + L-glutamate + ADP + phosphate + 2 H(+). Functionally, allows the formation of correctly charged Asn-tRNA(Asn) or Gln-tRNA(Gln) through the transamidation of misacylated Asp-tRNA(Asn) or Glu-tRNA(Gln) in organisms which lack either or both of asparaginyl-tRNA or glutaminyl-tRNA synthetases. The reaction takes place in the presence of glutamine and ATP through an activated phospho-Asp-tRNA(Asn) or phospho-Glu-tRNA(Gln). This is Aspartyl/glutamyl-tRNA(Asn/Gln) amidotransferase subunit C from Crocosphaera subtropica (strain ATCC 51142 / BH68) (Cyanothece sp. (strain ATCC 51142)).